The chain runs to 260 residues: Circadian clock-controlled protein daywake (260 aa).

A signal peptide spans 1 to 25; that stretch reads MQLTSASVCLLWMGLLSWVSHRIDA.

This sequence belongs to the TO family.

Functionally, component of the circadian clock or downstream effector of clock function. Required for suppressing daytime sleep (siesta) under ambient environmental temperatures. Part of a heat avoidance mechanism that modulates daytime sleep behavior under different environmental temperatures to minimize the risk of heat exposure. Under cooler ambient temperatures, suppresses daytime sleep (siesta) and thus allows for longer periods of daytime activity. This is Circadian clock-controlled protein daywake from Drosophila yakuba (Fruit fly).